A 387-amino-acid chain; its full sequence is Protein TsgA homolog (387 aa).

12 helical membrane passes run 11–31, 47–67, 76–96, 101–121, 134–154, 160–180, 205–225, 243–263, 271–291, 299–319, 331–351, and 358–378; these read WISF…GMIM, NIFT…SWLI, LIFG…STSI, INIF…TFII, LLLT…ISAY, ILWY…FILT, IILL…FISW, VLVS…SFII, MFIF…YSKS, IISL…LASL, LILF…SPIV, and TTLI…CIIF.

This sequence belongs to the major facilitator superfamily. TsgA family.

It localises to the cell membrane. This Buchnera aphidicola subsp. Schizaphis graminum (strain Sg) protein is Protein TsgA homolog.